The primary structure comprises 455 residues: Gamma-glutamyl phosphate reductase (455 aa).

The protein belongs to the gamma-glutamyl phosphate reductase family.

Its subcellular location is the cytoplasm. The catalysed reaction is L-glutamate 5-semialdehyde + phosphate + NADP(+) = L-glutamyl 5-phosphate + NADPH + H(+). It participates in amino-acid biosynthesis; L-proline biosynthesis; L-glutamate 5-semialdehyde from L-glutamate: step 2/2. Catalyzes the NADPH-dependent reduction of L-glutamate 5-phosphate into L-glutamate 5-semialdehyde and phosphate. The product spontaneously undergoes cyclization to form 1-pyrroline-5-carboxylate. In Synechococcus sp. (strain JA-3-3Ab) (Cyanobacteria bacterium Yellowstone A-Prime), this protein is Gamma-glutamyl phosphate reductase.